The chain runs to 957 residues: Protein translocase subunit SecA (957 aa).

Residues Q87, 105–109, and D512 contribute to the ATP site; that span reads GEGKT. Residues 924 to 957 are disordered; sequence AAPAQAPSKSKRSAGRNDPCPCGSGQKYKKCCGK. Residues C943, C945, C954, and C955 each contribute to the Zn(2+) site.

Belongs to the SecA family. In terms of assembly, monomer and homodimer. Part of the essential Sec protein translocation apparatus which comprises SecA, SecYEG and auxiliary proteins SecDF-YajC and YidC. Requires Zn(2+) as cofactor.

The protein resides in the cell inner membrane. The protein localises to the cytoplasm. The enzyme catalyses ATP + H2O + cellular proteinSide 1 = ADP + phosphate + cellular proteinSide 2.. Part of the Sec protein translocase complex. Interacts with the SecYEG preprotein conducting channel. Has a central role in coupling the hydrolysis of ATP to the transfer of proteins into and across the cell membrane, serving as an ATP-driven molecular motor driving the stepwise translocation of polypeptide chains across the membrane. This Geobacter sp. (strain M21) protein is Protein translocase subunit SecA.